Reading from the N-terminus, the 876-residue chain is AP-5 complex subunit beta-1 (876 aa).

In terms of assembly, probably part of the adaptor protein complex 5 (AP-5), a tetramer composed of AP5B1, AP5M1, AP5S1 and AP5Z1. Interacts with ZFYVE26 and SPG11.

As part of AP-5, a probable fifth adaptor protein complex, it may be involved in endosomal transport. In Rattus norvegicus (Rat), this protein is AP-5 complex subunit beta-1 (Ap5b1).